A 657-amino-acid polypeptide reads, in one-letter code: Protein kinase and PP2C-like domain-containing protein (657 aa).

The region spanning 32-327 (FSLLSPIAKG…LKIIEKHIAV (296 aa)) is the Protein kinase domain. ATP-binding positions include 38 to 46 (IAKGSESTV) and K59. The Proton acceptor; for kinase activity role is filled by D156. A PPM-type phosphatase domain is found at 390–647 (SWGSFATCGR…DNITVIVVFL (258 aa)). Residues D426, G427, D598, and D638 each coordinate Mn(2+).

This sequence in the N-terminal section; belongs to the protein kinase superfamily. Ser/Thr protein kinase family. It in the C-terminal section; belongs to the PP2C family. The cofactor is Mg(2+). Requires Mn(2+) as cofactor.

It carries out the reaction L-seryl-[protein] + ATP = O-phospho-L-seryl-[protein] + ADP + H(+). It catalyses the reaction L-threonyl-[protein] + ATP = O-phospho-L-threonyl-[protein] + ADP + H(+). The enzyme catalyses O-phospho-L-seryl-[protein] + H2O = L-seryl-[protein] + phosphate. The catalysed reaction is O-phospho-L-threonyl-[protein] + H2O = L-threonyl-[protein] + phosphate. This chain is Protein kinase and PP2C-like domain-containing protein, found in Oryza sativa subsp. japonica (Rice).